The following is a 217-amino-acid chain: MSYHKLTRDQIAQRVAQDIPEGSYVNLGIGLPTKIASYLPADKDVFLHSENGLLAFGPPPAAGEEDPELINAGKEYVTMLEGGCFFHHGDSFAMMRGGHLDICVLGAFQIAANGDLANWHTGAPDAIPSVGGAMDLAVGAKKVFVTTDHVTKKGEPKIVAELTYPATGQKCVDRIYTDLCIIDVVPEGLKVIEKVEGLSFEELQRLTGATLIDATQG.

Glu-50 is an active-site residue.

Belongs to the 3-oxoacid CoA-transferase subunit B family. In terms of assembly, heterodimer.

It carries out the reaction 3-oxoadipate + succinyl-CoA = 3-oxoadipyl-CoA + succinate. It participates in aromatic compound metabolism; beta-ketoadipate pathway; acetyl-CoA and succinyl-CoA from 3-oxoadipate: step 1/2. This is 3-oxoadipate CoA-transferase subunit B (pcaJ) from Acinetobacter baylyi (strain ATCC 33305 / BD413 / ADP1).